The following is a 629-amino-acid chain: Smc-like protein Sph1 (629 aa).

Coiled-coil stretches lie at residues Leu139–Asp282 and Ala318–Asp487.

It belongs to the Sph1/Sph2 family.

Its subcellular location is the cytoplasm. Its function is as follows. May play a role in a late step of replication. This chain is Smc-like protein Sph1 (sph1), found in Halobacterium salinarum (Halobacterium halobium).